Here is a 389-residue protein sequence, read N- to C-terminus: MKFTLISSCVALAAMTLAVEAAPNGKKINIPLAKNNSYKPSAKNALNKALAKYNRRKVGSGGITTEASGSVPMVDYENDVEYYGEVTVGTPGIKLKLDFDTGSSDMWFASTLCSSCSNSHTKYDPKKSSTYAADGRTWSISYGDGSSASGILATDNVNLGGLLIKKQTIELAKRESSAFATDVIDGLLGLGFNTITTVRGVKTPVDNLISQGLISRPIFGVYLGKQSNGGGGEYIFGGYDSSKFKGSLTTVPIDNSEGFWGVTVKSTKIGGTTVSASFDAILDTGTTLLLLPDDVAAKVARSYGASDNGDGTYSITCDTSKLQPLVFTLGSSTFEVPSDSLIFEKDGNKCIAGFAAGGDLAILGDVFLKNNYVVFNQEVPEVQIAPVAN.

Residues 1–21 (MKFTLISSCVALAAMTLAVEA) form the signal peptide. The propeptide at 22–66 (APNGKKINIPLAKNNSYKPSAKNALNKALAKYNRRKVGSGGITTE) is activation peptide. The Peptidase A1 domain occupies 82–385 (YYGEVTVGTP…NQEVPEVQIA (304 aa)). D100 is an active-site residue. A disulfide bridge connects residues C113 and C116. D283 is a catalytic residue. Residues C317 and C350 are joined by a disulfide bond.

This sequence belongs to the peptidase A1 family.

It catalyses the reaction Hydrolysis of proteins with broad specificity similar to that of pepsin A, preferring hydrophobic residues at P1 and P1'. Clots milk and activates trypsinogen. Does not cleave 4-Gln-|-His-5, but does cleave 10-His-|-Leu-11 and 12-Val-|-Glu-13 in B chain of insulin.. The protein is Rhizopuspepsin-1 (RNAP) of Rhizopus niveus.